Consider the following 661-residue polypeptide: UvrABC system protein B (661 aa).

One can recognise a Helicase ATP-binding domain in the interval 25 to 182; that stretch reads AGLSSKKRSQ…NDLINLQYER (158 aa). 38-45 lines the ATP pocket; that stretch reads GITGSGKT. The Beta-hairpin motif lies at 91-114; the sequence is YYDYYQPEAYIARTDTFIEKDSSI. Positions 430–592 constitute a Helicase C-terminal domain; sequence QVEDLISEIQ…IIPKTINRAI (163 aa). Residues 621–656 enclose the UVR domain; it reads KTHIDKLKKEMLKAASNLEFEQAVKLRDQLKTLEEA.

Belongs to the UvrB family. Forms a heterotetramer with UvrA during the search for lesions. Interacts with UvrC in an incision complex.

It localises to the cytoplasm. The UvrABC repair system catalyzes the recognition and processing of DNA lesions. A damage recognition complex composed of 2 UvrA and 2 UvrB subunits scans DNA for abnormalities. Upon binding of the UvrA(2)B(2) complex to a putative damaged site, the DNA wraps around one UvrB monomer. DNA wrap is dependent on ATP binding by UvrB and probably causes local melting of the DNA helix, facilitating insertion of UvrB beta-hairpin between the DNA strands. Then UvrB probes one DNA strand for the presence of a lesion. If a lesion is found the UvrA subunits dissociate and the UvrB-DNA preincision complex is formed. This complex is subsequently bound by UvrC and the second UvrB is released. If no lesion is found, the DNA wraps around the other UvrB subunit that will check the other stand for damage. The chain is UvrABC system protein B from Rickettsia rickettsii (strain Sheila Smith).